Reading from the N-terminus, the 156-residue chain is Small ribosomal subunit protein uS7 (156 aa).

Belongs to the universal ribosomal protein uS7 family. In terms of assembly, part of the 30S ribosomal subunit. Contacts proteins S9 and S11.

Its function is as follows. One of the primary rRNA binding proteins, it binds directly to 16S rRNA where it nucleates assembly of the head domain of the 30S subunit. Is located at the subunit interface close to the decoding center, probably blocks exit of the E-site tRNA. The chain is Small ribosomal subunit protein uS7 from Shewanella frigidimarina (strain NCIMB 400).